Here is a 562-residue protein sequence, read N- to C-terminus: NAD-dependent malic enzyme (562 aa).

Tyrosine 101 acts as the Proton donor in catalysis. Arginine 154 is an NAD(+) binding site. Catalysis depends on lysine 172, which acts as the Proton acceptor. Positions 243, 244, and 267 each coordinate a divalent metal cation. NAD(+) is bound by residues aspartate 267 and asparagine 415.

This sequence belongs to the malic enzymes family. In terms of assembly, homotetramer. Mg(2+) is required as a cofactor. It depends on Mn(2+) as a cofactor.

It catalyses the reaction (S)-malate + NAD(+) = pyruvate + CO2 + NADH. It carries out the reaction oxaloacetate + H(+) = pyruvate + CO2. In Aliivibrio fischeri (strain ATCC 700601 / ES114) (Vibrio fischeri), this protein is NAD-dependent malic enzyme.